We begin with the raw amino-acid sequence, 950 residues long: A disintegrin and metalloproteinase with thrombospondin motifs 15 (950 aa).

A signal peptide spans 1–17; that stretch reads MLLLGILTLAFAGRTAG. Positions 18 to 212 are excised as a propeptide; that stretch reads GSEPEREVVV…SRRRSGRAKR (195 aa). N-linked (GlcNAc...) asparagine glycosylation is present at Asn-141. The segment at 151–172 is disordered; it reads SQGAHLLQRRGVPGGPSGDPTS. A Cysteine switch motif is present at residues 172-179; sequence SRCGVASG. Position 174 (Cys-174) interacts with Zn(2+). Residues 218-427 form the Peptidase M12B domain; sequence RYVETLVVAD…GHGDCLLDQP (210 aa). 11 cysteine pairs are disulfide-bonded: Cys-293–Cys-345, Cys-322–Cys-327, Cys-339–Cys-422, Cys-377–Cys-406, Cys-448–Cys-470, Cys-459–Cys-480, Cys-465–Cys-499, Cys-493–Cys-504, Cys-528–Cys-565, Cys-532–Cys-570, and Cys-543–Cys-555. His-361 serves as a coordination point for Zn(2+). Glu-362 is an active-site residue. Zn(2+)-binding residues include His-365 and His-371. Residues 428 to 515 form the Disintegrin domain; that stretch reads SKPISLPEDL…ERHNLNKHRV (88 aa). The TSP type-1 1 domain occupies 516 to 571; the sequence is DGSWAKWDPYGPCSRTCGGGVQLARRQCTNPTPANGGKYCEGVRVKYRSCNLEPCP. N-linked (GlcNAc...) asparagine glycans are attached at residues Asn-591, Asn-623, and Asn-679. The segment at 701 to 838 is spacer; that stretch reads AIPAGASSID…SNQVEQPDDR (138 aa). The tract at residues 798–822 is disordered; the sequence is FYLPKEPREDKSSHPKDPRGPSVLH. Positions 802–816 are enriched in basic and acidic residues; the sequence is KEPREDKSSHPKDPR. TSP type-1 domains lie at 839 to 895 and 896 to 949; these read PPAR…EPCP and TWEL…VLRP.

It depends on Zn(2+) as a cofactor. Post-translationally, the precursor is cleaved by a furin endopeptidase. In terms of processing, glycosylated. Can be O-fucosylated by POFUT2 on a serine or a threonine residue found within the consensus sequence C1-X(2)-(S/T)-C2-G of the TSP type-1 repeat domains where C1 and C2 are the first and second cysteine residue of the repeat, respectively. Fucosylated repeats can then be further glycosylated by the addition of a beta-1,3-glucose residue by the glucosyltransferase, B3GALTL. Fucosylation mediates the efficient secretion of ADAMTS family members. Can be C-glycosylated with one or two mannose molecules on tryptophan residues within the consensus sequence W-X-X-W of the TPRs. Also N-glycosylated. These other glycosylations can also facilitate secretion. In terms of tissue distribution, expressed in fetal liver and kidney, but not in any of the adult tissues examined.

The protein localises to the secreted. It is found in the extracellular space. The protein resides in the extracellular matrix. It localises to the cell surface. Metalloprotease which has proteolytic activity against the proteoglycan VCAN, cleaving it at the 'Glu-1428-|-1429-Ala' site. Cleaves VCAN in the pericellular matrix surrounding myoblasts, facilitating myoblast contact and fusion which is required for skeletal muscle development and regeneration. In Homo sapiens (Human), this protein is A disintegrin and metalloproteinase with thrombospondin motifs 15 (ADAMTS15).